The following is a 96-amino-acid chain: SAGA-associated factor 11 (96 aa).

The segment at 68–89 (FHCKNCGRDVSANRFAAHLQRC) adopts an SGF11-type zinc-finger fold.

Belongs to the SGF11 family. Component of the 1.8 MDa SAGA transcription coactivator-HAT complex. SAGA is built of 5 distinct domains with specialized functions. Within the SAGA complex, SUS1, SGF11, SGF73 and UBP8 form an additional subcomplex of SAGA called the DUB module (deubiquitination module). Interacts directly with SGF73, SUS1 and UBP8.

The protein resides in the nucleus. Functionally, functions as a component of the transcription regulatory histone acetylation (HAT) complex SAGA. At the promoters, SAGA is required for recruitment of the basal transcription machinery. It influences RNA polymerase II transcriptional activity through different activities such as TBP interaction and promoter selectivity, interaction with transcription activators, and chromatin modification through histone acetylation and deubiquitination. SAGA acetylates nucleosomal histone H3 to some extent (to form H3K9ac, H3K14ac, H3K18ac and H3K23ac). SAGA interacts with DNA via upstream activating sequences (UASs). Involved in transcriptional regulation of a subset of SAGA-regulated genes. Within the SAGA complex, participates in a subcomplex, that specifically deubiquitinates histones H2B. This chain is SAGA-associated factor 11, found in Vanderwaltozyma polyspora (strain ATCC 22028 / DSM 70294 / BCRC 21397 / CBS 2163 / NBRC 10782 / NRRL Y-8283 / UCD 57-17) (Kluyveromyces polysporus).